Reading from the N-terminus, the 146-residue chain is uncharacterized protein (146 aa).

Residues 1–120 (MTDKFDANDE…TILKWEKNMD (120 aa)) form the N-acetyltransferase domain.

Belongs to the acetyltransferase family.

This is an uncharacterized protein from Streptococcus pyogenes serotype M6 (strain ATCC BAA-946 / MGAS10394).